The sequence spans 117 residues: Large ribosomal subunit protein bL20c (117 aa).

This sequence belongs to the bacterial ribosomal protein bL20 family.

The protein localises to the plastid. It is found in the chloroplast. Functionally, binds directly to 23S ribosomal RNA and is necessary for the in vitro assembly process of the 50S ribosomal subunit. It is not involved in the protein synthesizing functions of that subunit. The protein is Large ribosomal subunit protein bL20c of Olimarabidopsis pumila (Dwarf rocket).